A 705-amino-acid chain; its full sequence is Dolichyl-diphosphooligosaccharide--protein glycosyltransferase subunit STT3A (705 aa).

Over 1–17 (MTKFGFLRLSYEKQDTL) the chain is Cytoplasmic. A helical transmembrane segment spans residues 18–38 (LKLLILSMAAVLSFSTRLFAV). At 39-119 (LRFESVIHEF…IDIRNVCVFL (81 aa)) the chain is on the lumenal side. The DXD motif 1 signature appears at 47–49 (EFD). Asp49 provides a ligand contact to Mn(2+). Residues 120-138 (APLFSSFTTIVTYHLTKEL) traverse the membrane as a helical segment. The Cytoplasmic segment spans residues 139–140 (KD). A helical membrane pass occupies residues 141 to 158 (AGAGLLAAAMIAVVPGYI). The Lumenal segment spans residues 159 to 169 (SRSVAGSYDNE). The Mn(2+) site is built by Asp167 and Glu169. The DXD motif 2 motif lies at 167-169 (DNE). Residues 170–189 (GIAIFCMLLTYYMWIKAVKT) form a helical membrane-spanning segment. Over 190–191 (GS) the chain is Cytoplasmic. Residues 192–206 (ICWAAKCALAYFYMV) form a helical membrane-spanning segment. The Lumenal portion of the chain corresponds to 207 to 211 (SSWGG). The helical transmembrane segment at 212 to 228 (YVFLINLIPLHVLVLML) threads the bilayer. The Cytoplasmic portion of the chain corresponds to 229–233 (TGRFS). A helical membrane pass occupies residues 234–259 (HRIYVAYCTVYCLGTILSMQISFVGF). Residues 260–267 (QPVLSSEH) lie on the Lumenal side of the membrane. Residues 268–287 (MAAFGVFGLCQIHAFVDYLR) traverse the membrane as a helical segment. Topologically, residues 288–300 (SKLNPQQFEVLFR) are cytoplasmic. Residues 301–321 (SVISLVGFVLLTVGALLMLTG) traverse the membrane as a helical segment. Topologically, residues 322 to 356 (KISPWTGRFYSLLDPSYAKNNIPIIASVSEHQPTT) are lumenal. The SVSE motif signature appears at 348 to 351 (SVSE). The helical transmembrane segment at 357–379 (WSSYYFDLQLLVFMFPVGLYYCF) threads the bilayer. Topologically, residues 380 to 385 (SNLSDA) are cytoplasmic. Residues 386-402 (RIFIIMYGVTSMYFSAV) traverse the membrane as a helical segment. The Lumenal segment spans residues 403–406 (MVRL). Position 405 (Arg405) interacts with dolichyl diphosphooligosaccharide. Residues 407-428 (MLVLAPVMCILSGIGVSQVLST) traverse the membrane as a helical segment. The Cytoplasmic portion of the chain corresponds to 429–453 (YMKNLDISRPDKKSKKQQDSTYPIK). A helical transmembrane segment spans residues 454 to 473 (NEVASGMILVMAFFLITYTF). Over 474–705 (HSTWVTSEAY…DLDNRGLSRT (232 aa)) the chain is Lumenal. Positions 525–527 (WWD) are interacts with target acceptor peptide in protein substrate. Positions 525–529 (WWDYG) match the WWDYG motif motif. Tyr530 is a dolichyl diphosphooligosaccharide binding site. 2 N-linked (GlcNAc...) asparagine glycosylation sites follow: Asn537 and Asn544. N-linked (GlcNAc...) (high mannose) asparagine glycosylation is present at Asn548. Positions 592-599 (DINKFLWM) match the DK motif motif.

Belongs to the STT3 family. As to quaternary structure, component of the oligosaccharyltransferase (OST) complex. There are 2 OST complexes, OST-A and OST-B, which contain STT3A or STT3B as catalytic subunit, respectively. OST-A and OST-B contain common core subunits RPN1, RPN2, OST48, OST4, DAD1 and TMEM258, and OST-A contains DC2/OSTC and KRTCAP2/KCP2 specific accessory subunits. OST-A complex assembly occurs through the formation of 3 subcomplexes. Subcomplex 1 contains RPN1 and TMEM258, subcomplex 2 contains the OST-A-specific subunits STT3A, DC2/OSTC, and KCP2 as well as the core subunit OST4, and subcomplex 3 contains RPN2, DAD1, and OST48. The OST-A complex can form stable complexes with the Sec61 complex or with both the Sec61 and TRAP complexes. Requires Mg(2+) as cofactor. It depends on Mn(2+) as a cofactor. Expressed at high levels in placenta, liver, muscle and pancreas, and at very low levels in brain, lung and kidney. Expressed in skin fibroblasts (at protein level).

It is found in the endoplasmic reticulum. The protein localises to the endoplasmic reticulum membrane. The enzyme catalyses a di-trans,poly-cis-dolichyl diphosphooligosaccharide + L-asparaginyl-[protein] = N(4)-(oligosaccharide-(1-&gt;4)-N-acetyl-beta-D-glucosaminyl-(1-&gt;4)-N-acetyl-beta-D-glucosaminyl)-L-asparaginyl-[protein] + a di-trans,poly-cis-dolichyl diphosphate + H(+). Its pathway is protein modification; protein glycosylation. STT3A, but not STT3B, is specifically inhibited by the N-glycosylation inhibitor NGI-235, which prevents productive binding pose of the glycan donor in the active site of STT3A. Its function is as follows. Catalytic subunit of the oligosaccharyl transferase (OST) complex that catalyzes the initial transfer of a defined glycan (Glc(3)Man(9)GlcNAc(2) in eukaryotes) from the lipid carrier dolichol-pyrophosphate to an asparagine residue within an Asn-X-Ser/Thr consensus motif in nascent polypeptide chains, the first step in protein N-glycosylation. N-glycosylation occurs cotranslationally and the complex associates with the Sec61 complex at the channel-forming translocon complex that mediates protein translocation across the endoplasmic reticulum (ER). All subunits are required for a maximal enzyme activity. This subunit contains the active site and the acceptor peptide and donor lipid-linked oligosaccharide (LLO) binding pockets. STT3A is present in the majority of OST complexes and mediates cotranslational N-glycosylation of most sites on target proteins, while STT3B-containing complexes are required for efficient post-translational glycosylation and mediate glycosylation of sites that have been skipped by STT3A. STT3A-containing OST-A complex is also required to prevent hyperglycosylation of some target proteins by preventing glycosylation of facultative sites before folding of target proteins is completed. This chain is Dolichyl-diphosphooligosaccharide--protein glycosyltransferase subunit STT3A, found in Homo sapiens (Human).